Reading from the N-terminus, the 171-residue chain is ATP synthase subunit b (171 aa).

Residues 2 to 22 (FVVKMVLGFLILLSPLCATGL) form a helical membrane-spanning segment.

Belongs to the ATPase B chain family. In terms of assembly, F-type ATPases have 2 components, F(1) - the catalytic core - and F(0) - the membrane proton channel. F(1) has five subunits: alpha(3), beta(3), gamma(1), delta(1), epsilon(1). F(0) has three main subunits: a(1), b(2) and c(10-14). The alpha and beta chains form an alternating ring which encloses part of the gamma chain. F(1) is attached to F(0) by a central stalk formed by the gamma and epsilon chains, while a peripheral stalk is formed by the delta and b chains.

It localises to the cell inner membrane. Its function is as follows. F(1)F(0) ATP synthase produces ATP from ADP in the presence of a proton or sodium gradient. F-type ATPases consist of two structural domains, F(1) containing the extramembraneous catalytic core and F(0) containing the membrane proton channel, linked together by a central stalk and a peripheral stalk. During catalysis, ATP synthesis in the catalytic domain of F(1) is coupled via a rotary mechanism of the central stalk subunits to proton translocation. Functionally, component of the F(0) channel, it forms part of the peripheral stalk, linking F(1) to F(0). This chain is ATP synthase subunit b, found in Helicobacter pylori (strain G27).